Consider the following 677-residue polypeptide: Electrogenic aspartate/glutamate antiporter SLC25A12, mitochondrial (677 aa).

Ala-2 is subject to N-acetylalanine. Residues 2 to 294 (AVKVHTTKRG…TLADIERIAP (293 aa)) are regulatory N-terminal domain. Residues 2–329 (AVKVHTTKRG…WLQIAESAYR (328 aa)) are Mitochondrial intermembrane-facing. EF-hand domains lie at 40–85 (VQRY…SVLC), 86–121 (APDS…TIIH), 122–156 (HHIP…FLQE), and 157–192 (LQLE…IRSH). Asp-65, Thr-67, Asp-69, Leu-71, and Glu-76 together coordinate Ca(2+). The interval 295–310 (LAEGALPYNLAELQRQ) is linker loop domain. The carrier domain stretch occupies residues 320 to 612 (WLQIAESAYR…RWFYIDFGGL (293 aa)). Solcar repeat units follow at residues 324-416 (AESA…VRDK), 424-508 (IPLP…CKLL), and 516-604 (VGGI…LQRW). A helical membrane pass occupies residues 330-347 (FTLGSVAGAVGATAVYPI). Residues 348–390 (DLVKTRMQNQRGTGSVVGELMYKNSFDCFKKVLRYEGFFGLYR) are Mitochondrial matrix-facing. A helical membrane pass occupies residues 391-410 (GLIPQLIGVAPEKAIKLTVN). Topologically, residues 411–433 (DFVRDKFTKRDGSIPLPAEILAG) are mitochondrial intermembrane. Residues 434-447 (GCAGGSQVIFTNPL) form a helical membrane-spanning segment. Topologically, residues 448–482 (EIVKIRLQVAGEITTGPRVSALNVLQDLGLFGLYK) are mitochondrial matrix. The helical transmembrane segment at 483–502 (GAKACFLRDIPFSAIYFPVY) threads the bilayer. Residues 503-521 (AHCKLLLADENGRVGGINL) lie on the Mitochondrial intermembrane side of the membrane. Residues 522-539 (LTAGALAGVPAASLVTPA) form a helical membrane-spanning segment. Over 540-578 (DVIKTRLQVAARAGQTTYSGVVDCFRKILREEGPSAFWK) the chain is Mitochondrial matrix. A helical transmembrane segment spans residues 579–598 (GTAARVFRSSPQFGVTLVTY). Residues 599–677 (ELLQRWFYID…AQPKAAAAAQ (79 aa)) lie on the Mitochondrial intermembrane side of the membrane. Residues 613 to 677 (KPSGSEPTPK…AQPKAAAAAQ (65 aa)) are C-terminal domain.

It belongs to the mitochondrial carrier (TC 2.A.29) family. In terms of assembly, homodimer (via N-terminus).

The protein resides in the mitochondrion inner membrane. It carries out the reaction L-aspartate(in) + L-glutamate(out) + H(+)(out) = L-aspartate(out) + L-glutamate(in) + H(+)(in). The catalysed reaction is 3-sulfino-L-alanine(out) + L-glutamate(in) + H(+)(in) = 3-sulfino-L-alanine(in) + L-glutamate(out) + H(+)(out). The enzyme catalyses 3-sulfino-L-alanine(out) + L-aspartate(in) = 3-sulfino-L-alanine(in) + L-aspartate(out). Mitochondrial electrogenic aspartate/glutamate antiporter that favors efflux of aspartate and entry of glutamate and proton within the mitochondria as part of the malate-aspartate shuttle. Also mediates the uptake of L-cysteinesulfinate (3-sulfino-L-alanine) by mitochondria in exchange of L-glutamate and proton. Can also exchange L-cysteinesulfinate with aspartate in their anionic form without any proton translocation. Lacks transport activity towards L-glutamine or gamma-aminobutyric acid (GABA). The protein is Electrogenic aspartate/glutamate antiporter SLC25A12, mitochondrial of Mus musculus (Mouse).